The sequence spans 77 residues: Protein NS4 (77 aa).

It localises to the host cytoplasm. The protein resides in the host nucleus. Its subcellular location is the host nucleolus. In terms of biological role, may function as a nucleic acid binding protein that modulates transcription of genes participating in the IFN response. In Antilocapra americana (Pronghorn), this protein is Protein NS4 (Segment-9).